Reading from the N-terminus, the 322-residue chain is Ribose-phosphate pyrophosphokinase 1 (322 aa).

ATP contacts are provided by residues 39–41 (DGE) and 98–99 (RQ). Positions 132 and 173 each coordinate Mg(2+). Lysine 196 is an active-site residue. D-ribose 5-phosphate is bound by residues arginine 198, aspartate 224, and 228-232 (DTAGT).

The protein belongs to the ribose-phosphate pyrophosphokinase family. Class I subfamily. Homohexamer. Mg(2+) serves as cofactor.

It is found in the cytoplasm. It catalyses the reaction D-ribose 5-phosphate + ATP = 5-phospho-alpha-D-ribose 1-diphosphate + AMP + H(+). The protein operates within metabolic intermediate biosynthesis; 5-phospho-alpha-D-ribose 1-diphosphate biosynthesis; 5-phospho-alpha-D-ribose 1-diphosphate from D-ribose 5-phosphate (route I): step 1/1. Its function is as follows. Involved in the biosynthesis of the central metabolite phospho-alpha-D-ribosyl-1-pyrophosphate (PRPP) via the transfer of pyrophosphoryl group from ATP to 1-hydroxyl of ribose-5-phosphate (Rib-5-P). The protein is Ribose-phosphate pyrophosphokinase 1 of Streptococcus pneumoniae serotype 4 (strain ATCC BAA-334 / TIGR4).